Consider the following 457-residue polypeptide: UDP-N-acetylmuramoylalanine--D-glutamate ligase (457 aa).

Residue 116 to 122 coordinates ATP; that stretch reads GTNGKTT.

Belongs to the MurCDEF family.

It localises to the cytoplasm. It catalyses the reaction UDP-N-acetyl-alpha-D-muramoyl-L-alanine + D-glutamate + ATP = UDP-N-acetyl-alpha-D-muramoyl-L-alanyl-D-glutamate + ADP + phosphate + H(+). It functions in the pathway cell wall biogenesis; peptidoglycan biosynthesis. Functionally, cell wall formation. Catalyzes the addition of glutamate to the nucleotide precursor UDP-N-acetylmuramoyl-L-alanine (UMA). The chain is UDP-N-acetylmuramoylalanine--D-glutamate ligase from Caldicellulosiruptor bescii (strain ATCC BAA-1888 / DSM 6725 / KCTC 15123 / Z-1320) (Anaerocellum thermophilum).